A 385-amino-acid polypeptide reads, in one-letter code: Alanine--glyoxylate aminotransferase 1 (385 aa).

The residue at position 201 (Lys-201) is an N6-(pyridoxal phosphate)lysine. Arg-354 contacts substrate.

This sequence belongs to the class-V pyridoxal-phosphate-dependent aminotransferase family. In terms of assembly, homodimer. Requires pyridoxal 5'-phosphate as cofactor.

The enzyme catalyses glyoxylate + L-alanine = glycine + pyruvate. Its pathway is amino-acid biosynthesis; glycine biosynthesis; glycine from glyoxylate: step 1/1. Its function is as follows. Has alanine:glyoxylate aminotransferase activity. The chain is Alanine--glyoxylate aminotransferase 1 from Saccharomyces cerevisiae (strain ATCC 204508 / S288c) (Baker's yeast).